The following is a 419-amino-acid chain: Mitogen-activated protein kinase pmk-2 (419 aa).

The 302-residue stretch at 49–350 (YNSLKPLGEG…VSSALRHDYL (302 aa)) folds into the Protein kinase domain. ATP contacts are provided by residues 55–63 (LGEGAYGVV) and lysine 78. The Proton acceptor role is filled by aspartate 210. A Phosphothreonine modification is found at threonine 222. Residues 222-224 (TGY) carry the TXY motif. Tyrosine 224 carries the post-translational modification Phosphotyrosine.

This sequence belongs to the protein kinase superfamily. CMGC Ser/Thr protein kinase family. MAP kinase subfamily. The cofactor is Mg(2+). In terms of processing, dually phosphorylated on Thr-222 and Tyr-224, which activates the enzyme.

Its subcellular location is the cytoplasm. The catalysed reaction is L-seryl-[protein] + ATP = O-phospho-L-seryl-[protein] + ADP + H(+). It catalyses the reaction L-threonyl-[protein] + ATP = O-phospho-L-threonyl-[protein] + ADP + H(+). Activated by phosphorylation on threonine and tyrosine. Inhibited by pyridinyl-imidazole related compounds. In terms of biological role, responds to activation by environmental stress and pro-inflammatory cytokines by phosphorylating downstream targets. In Caenorhabditis elegans, this protein is Mitogen-activated protein kinase pmk-2 (pmk-2).